Consider the following 1180-residue polypeptide: DNA-directed RNA polymerase subunit beta' (1180 aa).

Cys-60, Cys-62, Cys-75, and Cys-78 together coordinate Zn(2+). 3 residues coordinate Mg(2+): Asp-449, Asp-451, and Asp-453. Residues Cys-792, Cys-872, Cys-879, and Cys-882 each contribute to the Zn(2+) site.

Belongs to the RNA polymerase beta' chain family. The RNAP catalytic core consists of 2 alpha, 1 beta, 1 beta' and 1 omega subunit. When a sigma factor is associated with the core the holoenzyme is formed, which can initiate transcription. Requires Mg(2+) as cofactor. Zn(2+) serves as cofactor.

It catalyses the reaction RNA(n) + a ribonucleoside 5'-triphosphate = RNA(n+1) + diphosphate. In terms of biological role, DNA-dependent RNA polymerase catalyzes the transcription of DNA into RNA using the four ribonucleoside triphosphates as substrates. This is DNA-directed RNA polymerase subunit beta' from Heliobacterium modesticaldum (strain ATCC 51547 / Ice1).